A 385-amino-acid polypeptide reads, in one-letter code: Polyketide synthase 1 (385 aa).

The active site involves Cys-157.

It belongs to the thiolase-like superfamily. Chalcone/stilbene synthases family. Expressed in glandular trichomes.

It is found in the cytoplasm. Functionally, polyketide synthase responsible for the biosynthesis of secondary metabolites. The sequence is that of Polyketide synthase 1 (PKSG1) from Cannabis sativa (Hemp).